Consider the following 367-residue polypeptide: Phosphoribosylaminoimidazole-succinocarboxamide synthase (367 aa).

The protein belongs to the SAICAR synthetase family.

It catalyses the reaction 5-amino-1-(5-phospho-D-ribosyl)imidazole-4-carboxylate + L-aspartate + ATP = (2S)-2-[5-amino-1-(5-phospho-beta-D-ribosyl)imidazole-4-carboxamido]succinate + ADP + phosphate + 2 H(+). It participates in purine metabolism; IMP biosynthesis via de novo pathway; 5-amino-1-(5-phospho-D-ribosyl)imidazole-4-carboxamide from 5-amino-1-(5-phospho-D-ribosyl)imidazole-4-carboxylate: step 1/2. The sequence is that of Phosphoribosylaminoimidazole-succinocarboxamide synthase from Shewanella oneidensis (strain ATCC 700550 / JCM 31522 / CIP 106686 / LMG 19005 / NCIMB 14063 / MR-1).